Consider the following 314-residue polypeptide: Olfactory receptor 5P6 (314 aa).

Residues Met1–Val28 are Extracellular-facing. The N-linked (GlcNAc...) asparagine glycan is linked to Asn8. A helical transmembrane segment spans residues Ile29 to Ile49. Over Leu50–Gln57 the chain is Cytoplasmic. A helical membrane pass occupies residues Leu58–Ser78. The Extracellular segment spans residues Ser79–Ile102. A disulfide bridge connects residues Cys100 and Cys192. The chain crosses the membrane as a helical span at residues Gln103–Tyr123. Residues Asp124 to Ser136 are Cytoplasmic-facing. Residues Thr137–Leu157 form a helical membrane-spanning segment. At Asn158–Ala199 the chain is on the extracellular side. A helical membrane pass occupies residues Thr200–Ser220. Over Tyr221–Ala240 the chain is Cytoplasmic. Residues Phe241–Ile261 form a helical membrane-spanning segment. At Tyr262 to Asn274 the chain is on the extracellular side. A helical transmembrane segment spans residues Lys275–Leu295. Topologically, residues Arg296–Ser314 are cytoplasmic.

This sequence belongs to the G-protein coupled receptor 1 family.

It is found in the cell membrane. Its function is as follows. Potential odorant receptor. The polypeptide is Olfactory receptor 5P6 (Mus musculus (Mouse)).